Reading from the N-terminus, the 432-residue chain is Glutamyl-tRNA reductase (432 aa).

Residues 49–52 (TCNR), S109, 114–116 (EGQ), and Q120 each bind substrate. Catalysis depends on C50, which acts as the Nucleophile. 189–194 (GAGKMS) serves as a coordination point for NADP(+).

The protein belongs to the glutamyl-tRNA reductase family. Homodimer.

It catalyses the reaction (S)-4-amino-5-oxopentanoate + tRNA(Glu) + NADP(+) = L-glutamyl-tRNA(Glu) + NADPH + H(+). Its pathway is porphyrin-containing compound metabolism; protoporphyrin-IX biosynthesis; 5-aminolevulinate from L-glutamyl-tRNA(Glu): step 1/2. It functions in the pathway porphyrin-containing compound metabolism; chlorophyll biosynthesis. Catalyzes the NADPH-dependent reduction of glutamyl-tRNA(Glu) to glutamate 1-semialdehyde (GSA). In Cyanothece sp. (strain PCC 7425 / ATCC 29141), this protein is Glutamyl-tRNA reductase.